A 263-amino-acid chain; its full sequence is Chromosomal replication initiator protein DnaA (263 aa).

A region of interest (domain I, interacts with DnaA modulators) is located at residue aspartate 1. Aspartate 1 is a region of interest (domain II). The segment at 1 to 177 is domain III, AAA+ region; the sequence is DSGLGKTHLL…GIINKIEFSI (177 aa). Positions 3, 5, 6, and 7 each coordinate ATP. The segment at 178 to 263 is domain IV, binds dsDNA; the sequence is IQDNSAAPKI…KNYSEIGVAF (86 aa).

It belongs to the DnaA family. In terms of assembly, oligomerizes as a right-handed, spiral filament on DNA at oriC.

It localises to the cytoplasm. Plays an essential role in the initiation and regulation of chromosomal replication. ATP-DnaA binds to the origin of replication (oriC) to initiate formation of the DNA replication initiation complex once per cell cycle. Binds the DnaA box (a 9 base pair repeat at the origin) and separates the double-stranded (ds)DNA. Forms a right-handed helical filament on oriC DNA; dsDNA binds to the exterior of the filament while single-stranded (ss)DNA is stabiized in the filament's interior. The ATP-DnaA-oriC complex binds and stabilizes one strand of the AT-rich DNA unwinding element (DUE), permitting loading of DNA polymerase. After initiation quickly degrades to an ADP-DnaA complex that is not apt for DNA replication. Binds acidic phospholipids. This Spiroplasma apis protein is Chromosomal replication initiator protein DnaA.